A 138-amino-acid chain; its full sequence is Large ribosomal subunit protein uL16 (138 aa).

It belongs to the universal ribosomal protein uL16 family. As to quaternary structure, part of the 50S ribosomal subunit.

Its function is as follows. Binds 23S rRNA and is also seen to make contacts with the A and possibly P site tRNAs. The sequence is that of Large ribosomal subunit protein uL16 from Chlamydia caviae (strain ATCC VR-813 / DSM 19441 / 03DC25 / GPIC) (Chlamydophila caviae).